We begin with the raw amino-acid sequence, 356 residues long: Xylose/arabinose import permease protein XylH (356 aa).

The next 10 membrane-spanning stretches (helical) occupy residues 14 to 34 (LFLV…AYFS), 41 to 61 (IFQY…LMLC), 70 to 90 (ALAN…YQAI), 96 to 116 (IVVS…MNGL), 126 to 146 (LITT…YSGG), 161 to 181 (VSIL…LILL), 211 to 231 (VKII…IIQG), 242 to 262 (FTAD…TSLV), 266 to 286 (GSLV…NGFN), and 287 to 307 (ILGI…VVVM).

The protein belongs to the binding-protein-dependent transport system permease family. As to quaternary structure, the complex is composed of two ATP-binding proteins (XylG), two transmembrane proteins (XylH) and a solute-binding protein (XylF).

It localises to the cell membrane. Its function is as follows. Part of the ABC transporter complex XylFGH involved in the uptake of xylose and arabinose. Responsible for the translocation of the substrate across the membrane. This Sulfolobus acidocaldarius (strain ATCC 33909 / DSM 639 / JCM 8929 / NBRC 15157 / NCIMB 11770) protein is Xylose/arabinose import permease protein XylH.